A 427-amino-acid polypeptide reads, in one-letter code: Flotillin-1 (427 aa).

3 positions are modified to phosphoserine: serine 19, serine 163, and serine 385. Threonine 387 carries the post-translational modification Phosphothreonine.

The protein belongs to the band 7/mec-2 family. Flotillin subfamily. As to quaternary structure, heterooligomeric complex of flotillin-1 and flotillin-2 and caveolin-1 and caveolin-2. Interacts with ECPAS.

Its subcellular location is the cell membrane. It localises to the endosome. The protein localises to the membrane. The protein resides in the caveola. It is found in the melanosome. Its subcellular location is the membrane raft. In terms of biological role, may act as a scaffolding protein within caveolar membranes, functionally participating in formation of caveolae or caveolae-like vesicles. The chain is Flotillin-1 (FLOT1) from Pongo abelii (Sumatran orangutan).